The sequence spans 327 residues: DNA-directed RNA polymerase subunit alpha (327 aa).

Residues 1–233 form an alpha N-terminal domain (alpha-NTD) region; that stretch reads MVREKVKVST…NLFIPFLHVE (233 aa). Positions 266–327 are alpha C-terminal domain (alpha-CTD); it reads EQGFQYIFID…KKILDILEKK (62 aa).

It belongs to the RNA polymerase alpha chain family. As to quaternary structure, in plastids the minimal PEP RNA polymerase catalytic core is composed of four subunits: alpha, beta, beta', and beta''. When a (nuclear-encoded) sigma factor is associated with the core the holoenzyme is formed, which can initiate transcription.

The protein resides in the plastid. It is found in the chloroplast. It catalyses the reaction RNA(n) + a ribonucleoside 5'-triphosphate = RNA(n+1) + diphosphate. DNA-dependent RNA polymerase catalyzes the transcription of DNA into RNA using the four ribonucleoside triphosphates as substrates. The protein is DNA-directed RNA polymerase subunit alpha of Barbarea verna (Land cress).